A 370-amino-acid chain; its full sequence is Alpha-(1,3)-fucosyltransferase 7 (370 aa).

Residues 1 to 36 (MVQGCLCWRGCCDLKTSFPWVTNSRRLWMNCIGCNP) are Cytoplasmic-facing. The chain crosses the membrane as a helical; Signal-anchor for type II membrane protein span at residues 37–59 (VWRLRAWGCLAGGTTLMVIWLFW). The Lumenal segment spans residues 60–370 (LLRSVPGGAP…YEDLESWFQA (311 aa)). The N-linked (GlcNAc...) asparagine glycan is linked to Asn-86. An intrachain disulfide couples Cys-96 to Cys-104. N-linked (GlcNAc...) asparagine glycosylation is present at Asn-109. A disulfide bond links Cys-239 and Cys-242. Asn-319 is a glycosylation site (N-linked (GlcNAc...) asparagine). A disulfide bond links Cys-346 and Cys-349.

The protein belongs to the glycosyltransferase 10 family. N-glycosylated. Expressed in lymph node and kidney.

The protein localises to the golgi apparatus. Its subcellular location is the golgi stack membrane. The enzyme catalyses an N-acetyl-alpha-neuraminyl-(2-&gt;3)-beta-D-galactosyl-(1-&gt;4)-N-acetyl-beta-D-glucosaminyl derivative + GDP-beta-L-fucose = an alpha-Neu5Ac-(2-&gt;3)-beta-D-Gal-(1-&gt;4)-[alpha-L-Fuc-(1-&gt;3)]-beta-D-GlcNAc derivative + GDP + H(+). It catalyses the reaction a neolactoside IV(3)-alpha-NeuAc-nLc4Cer + GDP-beta-L-fucose = a neolactoside IV(3)-alpha-NeuNAc,III(3)-alpha-Fuc-nLc4Cer + GDP + H(+). It carries out the reaction a neolactoside VI(3)-alpha-NeuNAc-nLc6Cer + GDP-beta-L-fucose = a neolactoside VI(3)-alpha-NeuAc,V(3)-alphaFuc-nLc6Cer + GDP + H(+). The catalysed reaction is an alpha-Neu5Ac-(2-&gt;3)-beta-D-Gal-(1-&gt;4)-beta-D-GlcNAc-(1-&gt;3)-beta-D-Gal-(1-&gt;4)-[alpha-L-Fuc-(1-&gt;3)]-beta-D-GlcNAc derivative + GDP-beta-L-fucose = an alpha-Neu5Ac-(2-&gt;3)-beta-D-Gal-(1-&gt;4)-[alpha-L-Fuc-(1-&gt;3)]-beta-D-GlcNAc-(1-&gt;3)-beta-D-Gal-(1-&gt;4)-[alpha-L-Fuc-(1-&gt;3)]-beta-D-GlcNAc derivative + GDP + H(+). The enzyme catalyses an alpha-Neu5Ac-(2-&gt;3)-beta-D-Gal-(1-&gt;4)-beta-D-GlcNAc6S derivative + GDP-beta-L-fucose = an alpha-Neu5Ac-(2-&gt;3)-beta-D-Gal-(1-&gt;4)-[alpha-L-Fuc-(1-&gt;3)]-beta-D-GlcNAc6S derivative + GDP + H(+). It catalyses the reaction alpha-Neu5Ac-(2-&gt;3)-beta-D-Gal-(1-&gt;4)-beta-D-GlcNAc-(1-&gt;3)-beta-D-Gal-(1-&gt;4)-D-Glc + GDP-beta-L-fucose = alpha-Neu5Ac-(2-&gt;3)-beta-D-Gal-(1-&gt;4)-[alpha-L-Fuc-(1-&gt;3)]-beta-D-GlcNAc-(1-&gt;3)-beta-D-Gal-(1-&gt;4)-D-Glc + GDP + H(+). It carries out the reaction alpha-Neu5Ac-(2-&gt;3)-beta-D-Gal-(1-&gt;4)-beta-D-GlcNAc-(1-&gt;3)-beta-D-Gal-(1-&gt;4)-[alpha-L-Fuc-(1-&gt;3)]-beta-D-GlcNAc-(1-&gt;3)-beta-D-Gal-(1-&gt;4)-beta-D-GlcNAc + GDP-beta-L-fucose = alpha-Neu5Ac-(2-&gt;3)-beta-D-Gal-(1-&gt;4)-[alpha-L-Fuc-(1-&gt;3)]-beta-D-GlcNAc-(1-&gt;3)-beta-D-Gal-(1-&gt;4)-[alpha-L-Fuc-(1-&gt;3)]-beta-D-GlcNAc-(1-&gt;3)-beta-D-Gal-(1-&gt;4)-beta-D-GlcNAc + GDP + H(+). The catalysed reaction is alpha-Neu5Ac-(2-&gt;3)-beta-D-Gal-(1-&gt;4)-beta-D-GlcNAc-(1-&gt;3)-beta-D-Gal-(1-&gt;4)-beta-D-GlcNAc-(1-&gt;3)-beta-D-Gal-(1-&gt;4)-beta-D-GlcNAc + GDP-beta-L-fucose = alpha-Neu5Ac-(2-&gt;3)-beta-D-Gal-(1-&gt;4)-[alpha-L-Fuc-(1-&gt;3)]-beta-D-GlcNAc-(1-&gt;3)-beta-D-Gal-(1-&gt;4)-beta-D-GlcNAc-(1-&gt;3)-beta-D-Gal-(1-&gt;4)-beta-D-GlcNAc + GDP + H(+). The protein operates within protein modification; protein glycosylation. With respect to regulation, inhibited by NaCl. Inhibited by GDP in a concentration dependent manner, with an IC(50) value of 93 uM. Also inhibited by GMP and GTP. Inhibited by N-ethylmaleimide. Activated by poly(ethylene glycol) by enhancing the thermal stability of FUT7. Activated by Mn2+, Ca2+, and Mg2+. Both panosialin A and B inhibit activity with IC(50) values of 4.8 and 5.3 ug/ml, respectively. Inhibited by gallic acid (GA) and (-)-epigallocatechin gallate (EGCG) in a time-dependent and irreversible manner with IC(50) values of 60 and 700 nM, respectively. In terms of biological role, catalyzes the transfer of L-fucose, from a guanosine diphosphate-beta-L-fucose, to the N-acetyl glucosamine (GlcNAc) of a distal alpha2,3 sialylated lactosamine unit of a glycoprotein or a glycolipid-linked sialopolylactosamines chain through an alpha-1,3 glycosidic linkage and participates in the final fucosylation step in the biosynthesis of the sialyl Lewis X (sLe(x)), a carbohydrate involved in cell and matrix adhesion during leukocyte trafficking and fertilization. In vitro, also synthesizes sialyl-dimeric-Lex structures, from VIM-2 structures and both di-fucosylated and trifucosylated structures from mono-fucosylated precursors. However does not catalyze alpha 1-3 fucosylation when an internal alpha 1-3 fucosylation is present in polylactosamine chain and the fucosylation rate of the internal GlcNAc residues is reduced once fucose has been added to the distal GlcNAc. Also catalyzes the transfer of a fucose from GDP-beta-fucose to the 6-sulfated a(2,3)sialylated substrate to produce 6-sulfo sLex mediating significant L-selectin-dependent cell adhesion. Through sialyl-Lewis(x) biosynthesis, can control SELE- and SELP-mediated cell adhesion with leukocytes and allows leukocytes tethering and rolling along the endothelial tissue thereby enabling the leukocytes to accumulate at a site of inflammation. May enhance embryo implantation through sialyl Lewis X (sLeX)-mediated adhesion of embryo cells to endometrium. May affect insulin signaling by up-regulating the phosphorylation and expression of some signaling molecules involved in the insulin-signaling pathway through SLe(x) which is present on the glycans of the INSRR alpha subunit. In Rattus norvegicus (Rat), this protein is Alpha-(1,3)-fucosyltransferase 7.